Consider the following 523-residue polypeptide: 2-isopropylmalate synthase (523 aa).

Residues 5–267 (VIIFDTTLRD…HTRINHQEIW (263 aa)) form the Pyruvate carboxyltransferase domain. 4 residues coordinate Mn(2+): aspartate 14, histidine 202, histidine 204, and asparagine 238. Residues 392-523 (RLDYFSVQSG…QNKENNKETV (132 aa)) are regulatory domain.

It belongs to the alpha-IPM synthase/homocitrate synthase family. LeuA type 1 subfamily. Homodimer. The cofactor is Mn(2+).

It localises to the cytoplasm. The enzyme catalyses 3-methyl-2-oxobutanoate + acetyl-CoA + H2O = (2S)-2-isopropylmalate + CoA + H(+). Its pathway is amino-acid biosynthesis; L-leucine biosynthesis; L-leucine from 3-methyl-2-oxobutanoate: step 1/4. Its function is as follows. Catalyzes the condensation of the acetyl group of acetyl-CoA with 3-methyl-2-oxobutanoate (2-ketoisovalerate) to form 3-carboxy-3-hydroxy-4-methylpentanoate (2-isopropylmalate). This is 2-isopropylmalate synthase from Citrobacter koseri (strain ATCC BAA-895 / CDC 4225-83 / SGSC4696).